A 467-amino-acid chain; its full sequence is UDP-N-acetylmuramate--L-alanine ligase (467 aa).

Position 114 to 120 (114 to 120) interacts with ATP; that stretch reads GTHGKTT.

Belongs to the MurCDEF family.

The protein localises to the cytoplasm. It catalyses the reaction UDP-N-acetyl-alpha-D-muramate + L-alanine + ATP = UDP-N-acetyl-alpha-D-muramoyl-L-alanine + ADP + phosphate + H(+). The protein operates within cell wall biogenesis; peptidoglycan biosynthesis. Functionally, cell wall formation. The sequence is that of UDP-N-acetylmuramate--L-alanine ligase from Azorhizobium caulinodans (strain ATCC 43989 / DSM 5975 / JCM 20966 / LMG 6465 / NBRC 14845 / NCIMB 13405 / ORS 571).